The primary structure comprises 137 residues: Small ribosomal subunit protein uS9 (137 aa).

It belongs to the universal ribosomal protein uS9 family.

The protein is Small ribosomal subunit protein uS9 (rps9) of Sulfurisphaera tokodaii (strain DSM 16993 / JCM 10545 / NBRC 100140 / 7) (Sulfolobus tokodaii).